The sequence spans 727 residues: Cyclin-T1 (727 aa).

Residue Ser117 is modified to Phosphoserine. The Nuclear localization signal motif lies at 253-270 (KRIWNWRAWQADRKTKAD). A Glycyl lysine isopeptide (Lys-Gly) (interchain with G-Cter in SUMO2) cross-link involves residue Lys343. Ser389 carries the post-translational modification Phosphoserine. The stretch at 389–420 (SLKEYRAKHAEELAAQKRQLENMEANVKSQYA) forms a coiled coil. At Lys391 the chain carries N6-acetyllysine. A Glycyl lysine isopeptide (Lys-Gly) (interchain with G-Cter in SUMO2) cross-link involves residue Lys416. 2 positions are modified to ADP-ribosylserine: Ser417 and Ser475. The histidine-rich domain (HRD) stretch occupies residues 481 to 551 (IKMRIKVHTA…RLGDPKHSSQ (71 aa)). Residue Lys482 forms a Glycyl lysine isopeptide (Lys-Gly) (interchain with G-Cter in SUMO2) linkage. At Lys486 the chain carries N6-(ADP-ribosyl)lysine. Positions 487 to 507 (VHTAADKHNSVDDSVTKNREH) are enriched in basic and acidic residues. Disordered regions lie at residues 487–631 (VHTA…QPSC) and 691–727 (YMNP…PLPK). His488 is subject to ADP-ribosylhistidine. Phosphoserine is present on residues Ser496 and Ser500. A compositionally biased stretch (basic residues) spans 508-531 (KEKHKTHPSNHHHHHNHHSHKHSH). The residue at position 531 (His531) is an ADP-ribosylhistidine. An ADP-ribosylserine mark is found at Ser532, Ser550, and Ser553. At His557 the chain carries ADP-ribosylhistidine. The span at 561–571 (SLSSSFSSSSS) shows a compositional bias: low complexity. Ser564 carries the post-translational modification ADP-ribosylserine. Phosphoserine is present on Ser565. A compositionally biased stretch (polar residues) spans 616–631 (GHSSDTSGLHFSQPSC). Residues 711–727 (PPPLPSEPPPPLPPLPK) show a composition bias toward pro residues.

This sequence belongs to the cyclin family. Cyclin C subfamily. In terms of assembly, cyclin-T1 is the predominant cyclin that associates with CDK9 to form a heterodimer called P-TEFb. P-TEFb forms a complex with AFF4/AF5Q31. Component of a complex which is at least composed of HTATSF1/Tat-SF1, P-TEFb complex, RNA pol II, SUPT5H, and NCL/nucleolin. Component of the 7SK snRNP complex at least composed of P-TEFb (composed of CDK9 and CCNT1/cyclin-T1), HEXIM1, HEXIM2, BCDIN3, SART3 proteins and 7SK and U6 snRNAs. Interacts (via central region) with ZMYND8 (via N-terminus); the interaction is direct and the association appears to occur between homodimeric ZMYND8 and the activated form of the P-TEFb complex. Interacts with BRD4, targets chromatin binding. Interacts with JMJD6. Interacts with MDFIC. Interacts with HSF1. Interacts with HTATSF1. Interacts with TBX21. (Microbial infection) Binds to BIV Tat, however Tat binds TAR RNA in a Cyc-T1-independent mode. Post-translationally, ADP-ribosylation on serine residues by PARP1 in response to DNA damage disrupts the phase separation activity of CCNT1, thereby preventing activation of CDK9.

The protein resides in the nucleus. Functionally, regulatory subunit of the cyclin-dependent kinase pair (CDK9/cyclin-T1) complex, also called positive transcription elongation factor B (P-TEFb), which facilitates the transition from abortive to productive elongation by phosphorylating the CTD (C-terminal domain) of the large subunit of RNA polymerase II (RNA Pol II). Required to activate the protein kinase activity of CDK9: acts by mediating formation of liquid-liquid phase separation (LLPS) that enhances binding of P-TEFb to the CTD of RNA Pol II. The protein is Cyclin-T1 (CCNT1) of Bos taurus (Bovine).